Consider the following 295-residue polypeptide: NADPH-dependent reductive aminase (295 aa).

An N-terminal signal peptide occupies residues 1–18; it reads MSKHIGIFGLGAMGTALA. 6-20 serves as a coordination point for NADP(+); sequence GIFGLGAMGTALAAK.

This sequence belongs to the HIBADH-related family. Homodimer. NADPH serves as cofactor.

Functionally, NADPH-dependent reductive aminase that catalyzes the reductive coupling of a broad set of carbonyl compounds with a variety of primary and secondary amines. Possesses remarkably high activity for the reductive amination of ketones and amines, often with high stereoselectivity and in some cases with ketone:amine ratios as low as 1:1. The cofactor NADPH, the carbonyl compound and the amine are added to the enzyme in that sequence, followed by the release of product, NADP(+) being released at last. RedAm is also able to act in the reverse, oxidative direction and exhibits activity in the dehydrogenation of amines to yield imines. The highest activity is found for 1-methyl-tetrahydroquinoline and acyclic amines are also found to be transformed. The sequence is that of NADPH-dependent reductive aminase from Aspergillus oryzae (strain ATCC 42149 / RIB 40) (Yellow koji mold).